Consider the following 287-residue polypeptide: 4-hydroxybenzoate octaprenyltransferase (287 aa).

9 helical membrane-spanning segments follow: residues 22–42, 45–65, 91–111, 114–134, 139–159, 161–181, 212–232, 236–256, and 267–287; these read IGTL…AQGF, LGVL…GCVI, TSTE…LLVL, NSLT…YPFM, QLPQ…AFAA, ANAL…WTIA, IIIA…GWLE, WIYF…QLQI, and AFLD…LGYL.

This sequence belongs to the UbiA prenyltransferase family. Mg(2+) serves as cofactor.

The protein resides in the cell inner membrane. It catalyses the reaction all-trans-octaprenyl diphosphate + 4-hydroxybenzoate = 4-hydroxy-3-(all-trans-octaprenyl)benzoate + diphosphate. It functions in the pathway cofactor biosynthesis; ubiquinone biosynthesis. In terms of biological role, catalyzes the prenylation of para-hydroxybenzoate (PHB) with an all-trans polyprenyl group. Mediates the second step in the final reaction sequence of ubiquinone-8 (UQ-8) biosynthesis, which is the condensation of the polyisoprenoid side chain with PHB, generating the first membrane-bound Q intermediate 3-octaprenyl-4-hydroxybenzoate. The sequence is that of 4-hydroxybenzoate octaprenyltransferase from Psychromonas ingrahamii (strain DSM 17664 / CCUG 51855 / 37).